The sequence spans 689 residues: Solute carrier family 22 member 23 (689 aa).

2 disordered regions span residues 1–55 (MAID…PLPA) and 162–188 (TASW…GKGN). Residue Asn24 is glycosylated (N-linked (GlcNAc...) asparagine). Polar residues predominate over residues 165 to 177 (WGTTSNRSNSSDT). 2 helical membrane-spanning segments follow: residues 229 to 249 (FSLL…ADWV) and 253 to 273 (PVLL…ALSV). N-linked (GlcNAc...) asparagine glycosylation occurs at Asn274. Helical transmembrane passes span 283-303 (FFEG…RIEL), 310-330 (FIIT…MPGL), 339-359 (VLQA…SIFP), 466-486 (TMAS…KFLG), 489-509 (GGLL…LGLL), 541-561 (IAFS…SVFF), 572-592 (CGGL…APII), and 601-621 (FLHH…ILLL).

The protein belongs to the major facilitator (TC 2.A.1) superfamily. Organic cation transporter (TC 2.A.1.19) family.

The protein localises to the membrane. This is Solute carrier family 22 member 23 (Slc22a23) from Mus musculus (Mouse).